The chain runs to 423 residues: uncharacterized protein (423 aa).

In terms of domain architecture, BON spans 75–145 (LHVVVTQPIA…PIVNNIKVAG (71 aa)).

It belongs to the bacterial secretin family.

Involved in the secretion of an unknown compound. This is an uncharacterized protein from Sinorhizobium fredii (strain NBRC 101917 / NGR234).